A 306-amino-acid chain; its full sequence is Acetyl-coenzyme A carboxylase carboxyl transferase subunit beta (306 aa).

The region spanning 27–296 is the CoA carboxyltransferase N-terminal domain; it reads LWHKCPSCEA…PKFVAAPIEP (270 aa). Zn(2+) contacts are provided by C31, C34, C50, and C53. The C4-type zinc-finger motif lies at 31–53; sequence CPSCEAVLYRPELEKTLDVCPKC.

It belongs to the AccD/PCCB family. Acetyl-CoA carboxylase is a heterohexamer composed of biotin carboxyl carrier protein (AccB), biotin carboxylase (AccC) and two subunits each of ACCase subunit alpha (AccA) and ACCase subunit beta (AccD). Zn(2+) is required as a cofactor.

The protein resides in the cytoplasm. The enzyme catalyses N(6)-carboxybiotinyl-L-lysyl-[protein] + acetyl-CoA = N(6)-biotinyl-L-lysyl-[protein] + malonyl-CoA. It participates in lipid metabolism; malonyl-CoA biosynthesis; malonyl-CoA from acetyl-CoA: step 1/1. Functionally, component of the acetyl coenzyme A carboxylase (ACC) complex. Biotin carboxylase (BC) catalyzes the carboxylation of biotin on its carrier protein (BCCP) and then the CO(2) group is transferred by the transcarboxylase to acetyl-CoA to form malonyl-CoA. The chain is Acetyl-coenzyme A carboxylase carboxyl transferase subunit beta from Pseudomonas fluorescens (strain Pf0-1).